A 335-amino-acid chain; its full sequence is Transmembrane protein 120B (335 aa).

Residues 1 to 39 adopt a coiled-coil conformation; that stretch reads MSLQKCQEEWGELEKEFQQLQETHKVYKQKLEELNGLQN. 6 helical membrane passes run 100 to 122, 130 to 150, 157 to 177, 193 to 213, 268 to 288, and 300 to 320; these read GLYLNLVLGNVNVTLLSNQAKFA, FKLYLTIILLLGAITCRFVLH, VFNFLLVWYYCTLTIRESILI, VSTFLSGVMLTWPDGLMYQIF, FLLPFLFFGHFWQLYNAITLF, and QVFVLALTFLLLFLGNFLTTL.

The protein belongs to the TMEM120 family.

It is found in the nucleus inner membrane. Its function is as follows. Necessary for efficient adipogenesis. Does not show ion channel activity. The chain is Transmembrane protein 120B (tmem120b) from Xenopus tropicalis (Western clawed frog).